Consider the following 140-residue polypeptide: Large ribosomal subunit protein uL14x/uL14z/uL14y (140 aa).

The protein belongs to the universal ribosomal protein uL14 family.

In Arabidopsis thaliana (Mouse-ear cress), this protein is Large ribosomal subunit protein uL14x/uL14z/uL14y (RPL23A).